The primary structure comprises 1004 residues: MPGKLRVHELAKQLGITSKELLATLKDKGEFVKTASSTIEPPVVKRMQEHYGSSGSDKSDTAAKPAAAKPAAPKPAASAAPKPGAPAKPAAPAAKPAPAAPSAASAAKPGAAPKPGVQAKPAAAAKPGAPAKPAAPAAPSAAKSGSAPKPAAAAKPAFSGPTPGDAAKKAEPAAKPGAEAPRPGGMPRPMGKPAPKPGARAPRVANNPFSTGGGERPAPRPGGGPRPGGGPRPGGGPRPQGQGRPGGQRDGQRDGQRDGQGNRGGQRQGAGAGGPRPQGGPRPQGGSRPQGGSAQGAQGAPSQERQGGGRRPSPAMMPPTPGQMPAKAPGKGGRGGQAGGGAGGGFNRGGGTGGGAGRGGRRGGTAGAFGRPGGAPRRGRKSKRQKRNEYESMQAPNVIGGVRLPDGKGATIRLARGASLADFADKIGADAAALVQALFNLGEMVTATASVSDETLQLLGEEMNYKVQVVSPEDEDRELLESFDLQFGEDEGGEADLAKRPPVVTVMGHVDHGKTRLLDTIRKANVGSDEAGGITQGIGAYQVKVNVEDTERTITFLDTPGHEAFTAMRARGAKSTDIAVLVVAADDGVMPQTVEAINHAKAADVPIVVAVNKIDKPEASPEKIRGQLTEYGLIPEEYGGDTIFVDISAKQGLNIDELLASVCLTADAELDLVANPEMDAQGVAIEAHLDRGRGPVATVIVQRGTLRVGDSIVAGDTYGRVRRMVDEYGRDVEEAGPSRPVQVQGLNGVPGAGDNLLVVEDDRIARQIANQRNARKRNALAARSRKRVSLEDLDSVLKEHSTLNLILKGDNAGSVEALEEALLKIEMDDEVQLNIIDRGVGAVTQTNVTLAAASDAVIIAFNVRAEGKATEEANAEGVDVRYYTIIYRAIEEVEAALKGMLKPIYEERVIGHAEIRAIFKASSVGLIAGCMVEDGKVRRNATVRIIRDGNVIAENAKIVSLRREKDDATEVSAGYECGMVLSYPDISVDDKIEVYEMVEVPREA.

Residues 36 to 393 form a disordered region; the sequence is SSTIEPPVVK…RQKRNEYESM (358 aa). Low complexity-rich tracts occupy residues 62–157 and 173–183; these read AAKP…AKPA and AAKPGAEAPRP. Composition is skewed to pro residues over residues 184 to 196 and 219 to 236; these read GGMPRPMGKPAPK and PRPGGGPRPGGGPRPGGG. 2 stretches are compositionally biased toward gly residues: residues 237–249 and 261–277; these read PRPQGQGRPGGQR and GNRGGQRQGAGAGGPRP. Residues 279 to 303 show a composition bias toward low complexity; it reads GGPRPQGGSRPQGGSAQGAQGAPSQ. Positions 330 to 373 are enriched in gly residues; the sequence is GKGGRGGQAGGGAGGGFNRGGGTGGGAGRGGRRGGTAGAFGRPG. Over residues 377-386 the composition is skewed to basic residues; that stretch reads RRGRKSKRQK. Residues 499-671 form the tr-type G domain; that stretch reads KRPPVVTVMG…VCLTADAELD (173 aa). The interval 508–515 is G1; it reads GHVDHGKT. 508-515 contacts GTP; sequence GHVDHGKT. The G2 stretch occupies residues 533 to 537; the sequence is GITQG. A G3 region spans residues 558–561; sequence DTPG. GTP contacts are provided by residues 558-562 and 612-615; these read DTPGH and NKID. Positions 612-615 are G4; the sequence is NKID. Positions 648-650 are G5; sequence SAK.

The protein belongs to the TRAFAC class translation factor GTPase superfamily. Classic translation factor GTPase family. IF-2 subfamily.

The protein localises to the cytoplasm. In terms of biological role, one of the essential components for the initiation of protein synthesis. Protects formylmethionyl-tRNA from spontaneous hydrolysis and promotes its binding to the 30S ribosomal subunits. Also involved in the hydrolysis of GTP during the formation of the 70S ribosomal complex. In Corynebacterium glutamicum (strain ATCC 13032 / DSM 20300 / JCM 1318 / BCRC 11384 / CCUG 27702 / LMG 3730 / NBRC 12168 / NCIMB 10025 / NRRL B-2784 / 534), this protein is Translation initiation factor IF-2.